The chain runs to 252 residues: Mediator of RNA polymerase II transcription subunit 4 (252 aa).

Coiled coils occupy residues 5–31 (KKST…ETLA) and 70–112 (KTHQ…QAKE). The disordered stretch occupies residues 213 to 252 (MLPPNHSNEFLMESLGPNKENEEDVEVMSTDSSSSSSDSD). A compositionally biased stretch (low complexity) spans 241-252 (STDSSSSSSDSD).

Belongs to the Mediator complex subunit 4 family. In terms of assembly, component of the Mediator complex.

It is found in the nucleus. In terms of biological role, component of the Mediator complex, a coactivator involved in the regulated transcription of nearly all RNA polymerase II-dependent genes. Mediator functions as a bridge to convey information from gene-specific regulatory proteins to the basal RNA polymerase II transcription machinery. Mediator is recruited to promoters by direct interactions with regulatory proteins and serves as a scaffold for the assembly of a functional preinitiation complex with RNA polymerase II and the general transcription factors. The chain is Mediator of RNA polymerase II transcription subunit 4 (med4) from Xenopus laevis (African clawed frog).